A 48-amino-acid polypeptide reads, in one-letter code: Sperm protamine P1 (48 aa).

The protein belongs to the protamine P1 family. In terms of tissue distribution, testis.

It localises to the nucleus. The protein localises to the chromosome. Functionally, protamines substitute for histones in the chromatin of sperm during the haploid phase of spermatogenesis. They compact sperm DNA into a highly condensed, stable and inactive complex. In Eptesicus fuscus (Big brown bat), this protein is Sperm protamine P1 (PRM1).